Consider the following 341-residue polypeptide: tRNA N6-adenosine threonylcarbamoyltransferase (341 aa).

Residues His-118 and His-122 each coordinate Fe cation. Substrate is bound by residues 141–145, Asp-174, Gly-187, and Asn-281; that span reads LVSGG. Residue Asp-309 participates in Fe cation binding.

It belongs to the KAE1 / TsaD family. Requires Fe(2+) as cofactor.

It is found in the cytoplasm. It carries out the reaction L-threonylcarbamoyladenylate + adenosine(37) in tRNA = N(6)-L-threonylcarbamoyladenosine(37) in tRNA + AMP + H(+). Functionally, required for the formation of a threonylcarbamoyl group on adenosine at position 37 (t(6)A37) in tRNAs that read codons beginning with adenine. Is involved in the transfer of the threonylcarbamoyl moiety of threonylcarbamoyl-AMP (TC-AMP) to the N6 group of A37, together with TsaE and TsaB. TsaD likely plays a direct catalytic role in this reaction. This is tRNA N6-adenosine threonylcarbamoyltransferase from Desulfitobacterium hafniense (strain Y51).